The primary structure comprises 111 residues: Cytochrome c oxidase subunit 6A1, mitochondrial (111 aa).

The N-terminal 26 residues, M1–M26, are a transit peptide targeting the mitochondrion. Topologically, residues S27 to S36 are mitochondrial matrix. Residues A37 to L61 traverse the membrane as a helical segment. Over K62–E111 the chain is Mitochondrial intermembrane.

Belongs to the cytochrome c oxidase subunit 6A family. Component of the cytochrome c oxidase (complex IV, CIV), a multisubunit enzyme composed of 14 subunits. The complex is composed of a catalytic core of 3 subunits MT-CO1, MT-CO2 and MT-CO3, encoded in the mitochondrial DNA, and 11 supernumerary subunits COX4I, COX5A, COX5B, COX6A, COX6B, COX6C, COX7A, COX7B, COX7C, COX8 and NDUFA4, which are encoded in the nuclear genome. The complex exists as a monomer or a dimer and forms supercomplexes (SCs) in the inner mitochondrial membrane with NADH-ubiquinone oxidoreductase (complex I, CI) and ubiquinol-cytochrome c oxidoreductase (cytochrome b-c1 complex, complex III, CIII), resulting in different assemblies (supercomplex SCI(1)III(2)IV(1) and megacomplex MCI(2)III(2)IV(2)).

The protein localises to the mitochondrion inner membrane. It functions in the pathway energy metabolism; oxidative phosphorylation. Its function is as follows. Component of the cytochrome c oxidase, the last enzyme in the mitochondrial electron transport chain which drives oxidative phosphorylation. The respiratory chain contains 3 multisubunit complexes succinate dehydrogenase (complex II, CII), ubiquinol-cytochrome c oxidoreductase (cytochrome b-c1 complex, complex III, CIII) and cytochrome c oxidase (complex IV, CIV), that cooperate to transfer electrons derived from NADH and succinate to molecular oxygen, creating an electrochemical gradient over the inner membrane that drives transmembrane transport and the ATP synthase. Cytochrome c oxidase is the component of the respiratory chain that catalyzes the reduction of oxygen to water. Electrons originating from reduced cytochrome c in the intermembrane space (IMS) are transferred via the dinuclear copper A center (CU(A)) of subunit 2 and heme A of subunit 1 to the active site in subunit 1, a binuclear center (BNC) formed by heme A3 and copper B (CU(B)). The BNC reduces molecular oxygen to 2 water molecules unsing 4 electrons from cytochrome c in the IMS and 4 protons from the mitochondrial matrix. This Rattus norvegicus (Rat) protein is Cytochrome c oxidase subunit 6A1, mitochondrial (Cox6a1).